The following is a 368-amino-acid chain: Chaperone protein DnaJ (368 aa).

In terms of domain architecture, J spans 5–70 (DYYQVLGVPR…KKRKLYDTHG (66 aa)). Residues 124–201 (GVERQIQIPT…CNGAGRVEDH (78 aa)) form a CR-type zinc finger. Zn(2+) contacts are provided by C137, C140, C153, C156, C175, C178, C189, and C192. 4 CXXCXGXG motif repeats span residues 137 to 144 (CTHCNGSG), 153 to 160 (CGTCRGSG), 175 to 182 (CPHCGGRG), and 189 to 196 (CKVCNGAG).

This sequence belongs to the DnaJ family. As to quaternary structure, homodimer. It depends on Zn(2+) as a cofactor.

It is found in the cytoplasm. In terms of biological role, participates actively in the response to hyperosmotic and heat shock by preventing the aggregation of stress-denatured proteins and by disaggregating proteins, also in an autonomous, DnaK-independent fashion. Unfolded proteins bind initially to DnaJ; upon interaction with the DnaJ-bound protein, DnaK hydrolyzes its bound ATP, resulting in the formation of a stable complex. GrpE releases ADP from DnaK; ATP binding to DnaK triggers the release of the substrate protein, thus completing the reaction cycle. Several rounds of ATP-dependent interactions between DnaJ, DnaK and GrpE are required for fully efficient folding. Also involved, together with DnaK and GrpE, in the DNA replication of plasmids through activation of initiation proteins. The polypeptide is Chaperone protein DnaJ (Xylella fastidiosa (strain M12)).